We begin with the raw amino-acid sequence, 463 residues long: UDP-glucosyltransferase A1 (463 aa).

This sequence belongs to the UDP-glycosyltransferase family.

The catalysed reaction is 18-hydroxy-(9Z)-octadecenoate + UDP-alpha-D-glucose = (9Z)-18-hydroxyoctadec-9-enoate 18-O-beta-D-glucoside + UDP + H(+). It carries out the reaction 17-hydroxy-(9Z)-octadecenoate + UDP-alpha-D-glucose = (9Z)-17-hydroxyoctadec-9-enoate 17-O-beta-D-glucoside + UDP + H(+). Its function is as follows. Catalyzes the first glycosylation step of sophorolipid biosynthesis, the coupling of glucose to a hydroxylated fatty acid to give rise to a glucolipid. Can glycosylate all hydroxyl fatty acids generated by cytochrome P450 monooxygenases CYP52M1, CYP52N1 and CYP52E3 into their corresponding glucolipids. Main products are 17-O- and 18-O-(beta-D-glucopyranosyl)-octadecenoic acids. The polypeptide is UDP-glucosyltransferase A1 (Starmerella bombicola (Yeast)).